The sequence spans 696 residues: DNA topoisomerase 6 subunit B (696 aa).

A disordered region spans residues 1-36; sequence MDDDAGDGAASGGTKRKVTAASSSAAAKGKAAGKGK. A compositionally biased stretch (low complexity) spans 20–36; the sequence is AASSSAAAKGKAAGKGK. ATP contacts are provided by residues Asn-88, Asp-187, 208-209, 217-224, and Lys-543; these read TK and GKFGLGAK.

The protein belongs to the TOP6B family. As to quaternary structure, homodimer. Heterotetramer of two TOP6A and two TOP6B subunits. Interacts with SPO11-2 and TOP6A3. Highly expressed in flowers before pollination. Expressed in roots and shoots.

The protein resides in the nucleus. The enzyme catalyses ATP-dependent breakage, passage and rejoining of double-stranded DNA.. Component of the DNA topoisomerase VI involved in chromatin organization and progression of endoreduplication cycles. Relaxes both positive and negative superturns and exhibits a strong decatenase activity. The B subunit binds ATP. May be involved in cell proliferation and stress tolerance. This chain is DNA topoisomerase 6 subunit B, found in Oryza sativa subsp. indica (Rice).